The sequence spans 145 residues: Basic phospholipase A2 cL038 (145 aa).

An N-terminal signal peptide occupies residues 1-21; sequence MYPAHLLVLLAVCVSLLGASA. Residues 22-27 constitute a propeptide that is removed on maturation; that stretch reads IPPLPL. 7 cysteine pairs are disulfide-bonded: cysteine 38/cysteine 98, cysteine 54/cysteine 144, cysteine 56/cysteine 72, cysteine 71/cysteine 125, cysteine 78/cysteine 118, cysteine 87/cysteine 111, and cysteine 105/cysteine 116. Ca(2+) contacts are provided by tyrosine 55, glycine 57, and glycine 59. Histidine 75 is a catalytic residue. Residue aspartate 76 coordinates Ca(2+). Aspartate 119 is a catalytic residue.

Belongs to the phospholipase A2 family. Group I subfamily. D49 sub-subfamily. It depends on Ca(2+) as a cofactor. Expressed by the venom gland.

The protein resides in the secreted. It catalyses the reaction a 1,2-diacyl-sn-glycero-3-phosphocholine + H2O = a 1-acyl-sn-glycero-3-phosphocholine + a fatty acid + H(+). Its function is as follows. PLA2 catalyzes the calcium-dependent hydrolysis of the 2-acyl groups in 3-sn-phosphoglycerides. This chain is Basic phospholipase A2 cL038, found in Laticauda semifasciata (Black-banded sea krait).